A 347-amino-acid polypeptide reads, in one-letter code: Eukaryotic translation initiation factor 3 subunit I (347 aa).

WD repeat units follow at residues glycine 8–aspartate 49, histidine 51–threonine 89, threonine 149–glutamate 190, valine 194–threonine 233, and glycine 291–lysine 330.

This sequence belongs to the eIF-3 subunit I family. In terms of assembly, component of the eukaryotic translation initiation factor 3 (eIF-3) complex.

The protein resides in the cytoplasm. In terms of biological role, component of the eukaryotic translation initiation factor 3 (eIF-3) complex, which is involved in protein synthesis of a specialized repertoire of mRNAs and, together with other initiation factors, stimulates binding of mRNA and methionyl-tRNAi to the 40S ribosome. The eIF-3 complex specifically targets and initiates translation of a subset of mRNAs involved in cell proliferation. The sequence is that of Eukaryotic translation initiation factor 3 subunit I from Candida glabrata (strain ATCC 2001 / BCRC 20586 / JCM 3761 / NBRC 0622 / NRRL Y-65 / CBS 138) (Yeast).